Reading from the N-terminus, the 240-residue chain is LexA repressor (240 aa).

Positions 26 to 46 form a DNA-binding region, H-T-H motif; that stretch reads FDEMKEALDLASKSGIHRLIT. Catalysis depends on for autocatalytic cleavage activity residues Ser161 and Lys199.

The protein belongs to the peptidase S24 family. As to quaternary structure, homodimer.

It carries out the reaction Hydrolysis of Ala-|-Gly bond in repressor LexA.. Functionally, represses a number of genes involved in the response to DNA damage (SOS response), including recA and lexA. In the presence of single-stranded DNA, RecA interacts with LexA causing an autocatalytic cleavage which disrupts the DNA-binding part of LexA, leading to derepression of the SOS regulon and eventually DNA repair. This Brucella ovis (strain ATCC 25840 / 63/290 / NCTC 10512) protein is LexA repressor.